The sequence spans 210 residues: NADH dehydrogenase [ubiquinone] iron-sulfur protein 8, mitochondrial (210 aa).

The transit peptide at 1-34 (MRCLTTPMLLRALAQAARAGPPCGRSLHSSAVAA) directs the protein to the mitochondrion. 4Fe-4S ferredoxin-type domains follow at residues 102-131 (RRYP…IEAE) and 141-170 (TRYD…EGPN). Residues Cys-111, Cys-114, Cys-117, Cys-121, Cys-150, Cys-153, Cys-156, and Cys-160 each contribute to the [4Fe-4S] cluster site.

The protein belongs to the complex I 23 kDa subunit family. Core subunit of respiratory chain NADH dehydrogenase (Complex I) which is composed of 45 different subunits. This is a component of the iron-sulfur (IP) fragment of the enzyme. Interacts with RAB5IF. [4Fe-4S] cluster is required as a cofactor.

Its subcellular location is the mitochondrion inner membrane. The catalysed reaction is a ubiquinone + NADH + 5 H(+)(in) = a ubiquinol + NAD(+) + 4 H(+)(out). Its function is as follows. Core subunit of the mitochondrial membrane respiratory chain NADH dehydrogenase (Complex I) which catalyzes electron transfer from NADH through the respiratory chain, using ubiquinone as an electron acceptor. Essential for the catalytic activity and assembly of complex I. In Pongo abelii (Sumatran orangutan), this protein is NADH dehydrogenase [ubiquinone] iron-sulfur protein 8, mitochondrial (NDUFS8).